The primary structure comprises 2481 residues: Tetratricopeptide repeat protein 28 (2481 aa).

Position 1 is an N-acetylmethionine (methionine 1). Positions 1–14 (MEQSPPPAPEPTQG) are enriched in pro residues. The interval 1-48 (MEQSPPPAPEPTQGPTPARSRRRREPESPPASAPIPLFGADTIGQRSP) is disordered. Serine 28 carries the phosphoserine modification. TPR repeat units follow at residues 58-91 (FVEK…DPQN), 93-125 (ILYS…NPKW), 126-159 (PKAY…DPKS), 196-229 (FVVV…GTCS), 234-267 (GSVF…AKTL), 274-307 (CRAH…AMKL), 314-347 (SSAL…AKQS), 354-387 (AREL…AKDL), 394-427 (ARAY…AQEL), 434-467 (MRAY…AEDL), 474-507 (GRAS…AQEL), 514-547 (GRAY…SMEV), 554-587 (ASTH…AREL), 594-627 (ARAL…APDL), 634-667 (GKVC…AKDL), 674-707 (AKAY…AQSL), 714-747 (FRAL…AHQV), 754-787 (ASAY…YQEL), 794-827 (CRAH…GQKL), 834-867 (AQVY…LQQL), 877-910 (GRAY…AQSL), 917-950 (AKAY…AHEL), 957-990 (AQAY…ARDM), 997-1030 (SDAA…AEET), 1037-1070 (GRAY…AAQM), 1077-1110 (TVSY…AEQL), 1117-1150 (AKIR…FETI), and 1169-1202 (TSSY…AFAD). Serine 1590 bears the Phosphoserine mark. 3 disordered regions span residues 2004 to 2055 (FVSK…DEEE), 2075 to 2161 (NTCF…DPQE), and 2176 to 2339 (AVER…PADA). Composition is skewed to polar residues over residues 2029 to 2043 (AYLQ…QLPP) and 2096 to 2122 (SVSS…NSPF). Serine 2104 carries the phosphoserine modification. A compositionally biased stretch (low complexity) spans 2130–2146 (SSDTGESDQSSTETDST). Residues 2149-2159 (SQEESNPKLDP) show a composition bias toward basic and acidic residues. The span at 2183–2214 (SGGQVSKSNNPEDGVQAPSSTAVFRASETSAF) shows a compositional bias: polar residues. Serine 2224 and serine 2251 each carry phosphoserine. A compositionally biased stretch (polar residues) spans 2238–2282 (RSSSLPKVSSGYSSPTTSEMSIKDSPSQHSGRPSPGCDSQTSQLD). Residues 2307 to 2339 (SPSSGHQSPAGSAPSPALSYSSAGSARSSPADA) show a composition bias toward low complexity. A phosphoserine mark is found at serine 2393 and serine 2398. A disordered region spans residues 2420 to 2467 (QHDGAPPKAPPNGHWRTETTSLGSLPLPAGPPATAPARPLRLPSGNGY).

Interacts with AURKB. In terms of tissue distribution, widely expressed in fetal tissues. In adult tissues, expressed in testis and ovary and, at much lower levels, in kidney and pancreas.

It localises to the cytoplasm. The protein localises to the cytoskeleton. The protein resides in the microtubule organizing center. Its subcellular location is the centrosome. It is found in the spindle. It localises to the spindle pole. The protein localises to the midbody. Its function is as follows. During mitosis, may be involved in the condensation of spindle midzone microtubules, leading to the formation of midbody. The polypeptide is Tetratricopeptide repeat protein 28 (TTC28) (Homo sapiens (Human)).